The following is a 193-amino-acid chain: ATP-dependent Clp protease proteolytic subunit (193 aa).

The Nucleophile role is filled by Ser-98. Residue His-123 is part of the active site.

It belongs to the peptidase S14 family. Fourteen ClpP subunits assemble into 2 heptameric rings which stack back to back to give a disk-like structure with a central cavity, resembling the structure of eukaryotic proteasomes.

The protein resides in the cytoplasm. The enzyme catalyses Hydrolysis of proteins to small peptides in the presence of ATP and magnesium. alpha-casein is the usual test substrate. In the absence of ATP, only oligopeptides shorter than five residues are hydrolyzed (such as succinyl-Leu-Tyr-|-NHMec, and Leu-Tyr-Leu-|-Tyr-Trp, in which cleavage of the -Tyr-|-Leu- and -Tyr-|-Trp bonds also occurs).. Its function is as follows. Cleaves peptides in various proteins in a process that requires ATP hydrolysis. Has a chymotrypsin-like activity. Plays a major role in the degradation of misfolded proteins. ClpXP is involved in the complete degradation of the Site-2 clipped anti-sigma-W factor RsiW. This results in the release of SigW and the transcription activation of the genes under the control of the sigma-W factor. In Oceanobacillus iheyensis (strain DSM 14371 / CIP 107618 / JCM 11309 / KCTC 3954 / HTE831), this protein is ATP-dependent Clp protease proteolytic subunit.